The sequence spans 881 residues: Phosphoinositide 3-kinase regulatory subunit 5 (881 aa).

Residues 23–99 (SRDAVSSRWA…APHIPPDSEL (77 aa)) are heterodimerization. 2 disordered regions span residues 312 to 339 (PVASENEEDEEEEEEDVETDGCSPERDS) and 472 to 499 (PQAKPRIPARSRRAHSLPQHGLGQKLQT). Residues 316-330 (ENEEDEEEEEEDVET) show a composition bias toward acidic residues. The tract at residues 657–757 (PILADMILYY…WNDVEKVCTS (101 aa)) is interaction with G beta gamma proteins.

In terms of assembly, heterodimer. Interacts with a catalytic subunit and with G beta gamma proteins.

The protein localises to the nucleus. It localises to the cytoplasm. Its subcellular location is the cell membrane. Greatly activated by G gamma proteins. Functionally, regulatory subunit of the PI3K gamma complex. The chain is Phosphoinositide 3-kinase regulatory subunit 5 (PIK3R5) from Gallus gallus (Chicken).